Here is a 383-residue protein sequence, read N- to C-terminus: S-adenosylmethionine synthase (383 aa).

Residue histidine 15 coordinates ATP. Mg(2+) is bound at residue aspartate 17. Glutamate 43 contacts K(+). Glutamate 56 and glutamine 99 together coordinate L-methionine. The segment at 99-109 is flexible loop; sequence QSPDINQGVDR. Residues 164-166, 230-231, aspartate 239, 245-246, alanine 262, and lysine 266 contribute to the ATP site; these read DAK, RF, and RK. An L-methionine-binding site is contributed by aspartate 239. Lysine 270 contributes to the L-methionine binding site.

The protein belongs to the AdoMet synthase family. Homotetramer; dimer of dimers. The cofactor is Mg(2+). K(+) serves as cofactor.

It localises to the cytoplasm. It carries out the reaction L-methionine + ATP + H2O = S-adenosyl-L-methionine + phosphate + diphosphate. The protein operates within amino-acid biosynthesis; S-adenosyl-L-methionine biosynthesis; S-adenosyl-L-methionine from L-methionine: step 1/1. Functionally, catalyzes the formation of S-adenosylmethionine (AdoMet) from methionine and ATP. The overall synthetic reaction is composed of two sequential steps, AdoMet formation and the subsequent tripolyphosphate hydrolysis which occurs prior to release of AdoMet from the enzyme. The sequence is that of S-adenosylmethionine synthase from Shewanella sp. (strain ANA-3).